We begin with the raw amino-acid sequence, 267 residues long: 4-hydroxy-tetrahydrodipicolinate reductase (267 aa).

Residues 12–17 (GPRGRM), 100–102 (GTT), and 126–129 (APNF) contribute to the NAD(+) site. Histidine 156 functions as the Proton donor/acceptor in the catalytic mechanism. Position 157 (histidine 157) interacts with (S)-2,3,4,5-tetrahydrodipicolinate. Lysine 160 acts as the Proton donor in catalysis. 166–167 (GT) is a binding site for (S)-2,3,4,5-tetrahydrodipicolinate.

The protein belongs to the DapB family.

The protein localises to the cytoplasm. The enzyme catalyses (S)-2,3,4,5-tetrahydrodipicolinate + NAD(+) + H2O = (2S,4S)-4-hydroxy-2,3,4,5-tetrahydrodipicolinate + NADH + H(+). The catalysed reaction is (S)-2,3,4,5-tetrahydrodipicolinate + NADP(+) + H2O = (2S,4S)-4-hydroxy-2,3,4,5-tetrahydrodipicolinate + NADPH + H(+). It participates in amino-acid biosynthesis; L-lysine biosynthesis via DAP pathway; (S)-tetrahydrodipicolinate from L-aspartate: step 4/4. Catalyzes the conversion of 4-hydroxy-tetrahydrodipicolinate (HTPA) to tetrahydrodipicolinate. This is 4-hydroxy-tetrahydrodipicolinate reductase from Bacillus subtilis (strain 168).